We begin with the raw amino-acid sequence, 132 residues long: Small ribosomal subunit protein uS8 (132 aa).

The protein belongs to the universal ribosomal protein uS8 family. In terms of assembly, part of the 30S ribosomal subunit. Contacts proteins S5 and S12.

One of the primary rRNA binding proteins, it binds directly to 16S rRNA central domain where it helps coordinate assembly of the platform of the 30S subunit. This Maricaulis maris (strain MCS10) (Caulobacter maris) protein is Small ribosomal subunit protein uS8.